The following is a 257-amino-acid chain: Thiazole synthase (257 aa).

Residue lysine 96 is the Schiff-base intermediate with DXP of the active site. 1-deoxy-D-xylulose 5-phosphate-binding positions include glycine 157, 184-185 (AG), and 206-207 (NT).

Belongs to the ThiG family. As to quaternary structure, homotetramer. Forms heterodimers with either ThiH or ThiS.

The protein localises to the cytoplasm. The catalysed reaction is [ThiS sulfur-carrier protein]-C-terminal-Gly-aminoethanethioate + 2-iminoacetate + 1-deoxy-D-xylulose 5-phosphate = [ThiS sulfur-carrier protein]-C-terminal Gly-Gly + 2-[(2R,5Z)-2-carboxy-4-methylthiazol-5(2H)-ylidene]ethyl phosphate + 2 H2O + H(+). The protein operates within cofactor biosynthesis; thiamine diphosphate biosynthesis. In terms of biological role, catalyzes the rearrangement of 1-deoxy-D-xylulose 5-phosphate (DXP) to produce the thiazole phosphate moiety of thiamine. Sulfur is provided by the thiocarboxylate moiety of the carrier protein ThiS. In vitro, sulfur can be provided by H(2)S. In Bartonella henselae (strain ATCC 49882 / DSM 28221 / CCUG 30454 / Houston 1) (Rochalimaea henselae), this protein is Thiazole synthase.